The chain runs to 178 residues: Cytochrome b6-f complex iron-sulfur subunit (178 aa).

Residues 20–42 (LLTFGSVTGVALGALYPVVNYFI) traverse the membrane as a helical segment. A Rieske domain is found at 65–161 (ASGWLADHKE…VNVENDNVFV (97 aa)). 4 residues coordinate [2Fe-2S] cluster: C107, H109, C125, and H128. C112 and C127 form a disulfide bridge.

The protein belongs to the Rieske iron-sulfur protein family. In terms of assembly, the 4 large subunits of the cytochrome b6-f complex are cytochrome b6, subunit IV (17 kDa polypeptide, PetD), cytochrome f and the Rieske protein, while the 4 small subunits are PetG, PetL, PetM and PetN. The complex functions as a dimer. [2Fe-2S] cluster is required as a cofactor.

The protein resides in the cellular thylakoid membrane. The enzyme catalyses 2 oxidized [plastocyanin] + a plastoquinol + 2 H(+)(in) = 2 reduced [plastocyanin] + a plastoquinone + 4 H(+)(out). Component of the cytochrome b6-f complex, which mediates electron transfer between photosystem II (PSII) and photosystem I (PSI), cyclic electron flow around PSI, and state transitions. In Synechococcus sp. (strain RCC307), this protein is Cytochrome b6-f complex iron-sulfur subunit.